We begin with the raw amino-acid sequence, 387 residues long: [LysW]-aminoadipate semialdehyde/glutamate semialdehyde transaminase (387 aa).

Pyridoxal 5'-phosphate is bound by residues 96–97 (GT) and phenylalanine 123. Residue arginine 126 participates in substrate binding. A pyridoxal 5'-phosphate-binding site is contributed by 207–210 (DEIQ). Lysine 236 carries the N6-(pyridoxal phosphate)lysine modification. Serine 264 contributes to the substrate binding site. Residue threonine 265 participates in pyridoxal 5'-phosphate binding.

It belongs to the class-III pyridoxal-phosphate-dependent aminotransferase family. LysJ subfamily. As to quaternary structure, homodimer. Pyridoxal 5'-phosphate serves as cofactor.

The protein resides in the cytoplasm. It catalyses the reaction [amino-group carrier protein]-C-terminal-gamma-(L-lysyl)-L-glutamate + 2-oxoglutarate = [amino-group carrier protein]-C-terminal-N-(1-carboxy-5-oxopentan-1-yl)-L-glutamine + L-glutamate. It carries out the reaction [amino-group carrier protein]-C-terminal-gamma-(L-ornithyl)-L-glutamate + 2-oxoglutarate = [amino-group carrier protein]-C-terminal-gamma-(L-glutamyl-5-semialdehyde)-L-glutamate + L-glutamate. It participates in amino-acid biosynthesis; L-lysine biosynthesis via AAA pathway; L-lysine from L-alpha-aminoadipate (Thermus route): step 4/5. It functions in the pathway amino-acid biosynthesis; L-arginine biosynthesis. Involved in both the arginine and lysine biosynthetic pathways. This Sulfolobus acidocaldarius (strain ATCC 33909 / DSM 639 / JCM 8929 / NBRC 15157 / NCIMB 11770) protein is [LysW]-aminoadipate semialdehyde/glutamate semialdehyde transaminase.